We begin with the raw amino-acid sequence, 253 residues long: Phycoerythrobilin:ferredoxin oxidoreductase (253 aa).

This sequence belongs to the HY2 family.

The enzyme catalyses (3Z)-phycoerythrobilin + oxidized 2[4Fe-4S]-[ferredoxin] = 15,16-dihydrobiliverdin + reduced 2[4Fe-4S]-[ferredoxin] + 2 H(+). Catalyzes the two-electron reduction of the C2 and C3(1) diene system of 15,16-dihydrobiliverdin. The polypeptide is Phycoerythrobilin:ferredoxin oxidoreductase (pebB) (Prochlorococcus marinus (strain MIT 9215)).